A 385-amino-acid chain; its full sequence is Putative nickel insertion protein (385 aa).

The protein belongs to the LarC family.

The protein is Putative nickel insertion protein of Geobacter sp. (strain M21).